The chain runs to 221 residues: MKRHKEKKYNYTYVITNLVNNKIYYGTHSTDDLNDGYMGSGTLLAQAKKKYGKKNFNLSILGFYKDFKSARDAERELVTIDVVNDPMTYNLKIGGEGGRRIGYRVSSETKEKISKAQKGKPKHLGFSDVCRKAQLGKKQSEETKAKRKEALLNNPYGYNRNKPSHKRDPIMWDNIEKIKEIWENSGKSGAIKLKKLAIEAGFPNKSYARMLEVFRGTRTLL.

Positions Lys-8–Leu-91 constitute a GIY-YIG domain. The interval Lys-137–Ser-164 is disordered. Residues Lys-138–Ala-150 show a composition bias toward basic and acidic residues.

To endonucleases of group I introns of fungi and phage. The cofactor is Mg(2+).

In terms of biological role, probably involved in the movement of the endonuclease-encoding DNA. In Escherichia coli (Bacteriophage T4), this protein is Endonuclease segA (segA).